Here is a 425-residue protein sequence, read N- to C-terminus: UDP-N-acetylglucosamine 1-carboxyvinyltransferase (425 aa).

25–26 (KN) serves as a coordination point for phosphoenolpyruvate. Arg95 lines the UDP-N-acetyl-alpha-D-glucosamine pocket. Cys119 functions as the Proton donor in the catalytic mechanism. The residue at position 119 (Cys119) is a 2-(S-cysteinyl)pyruvic acid O-phosphothioketal. UDP-N-acetyl-alpha-D-glucosamine is bound by residues 124-128 (RPVDQ), Asp306, and Ile328.

Belongs to the EPSP synthase family. MurA subfamily.

It is found in the cytoplasm. It carries out the reaction phosphoenolpyruvate + UDP-N-acetyl-alpha-D-glucosamine = UDP-N-acetyl-3-O-(1-carboxyvinyl)-alpha-D-glucosamine + phosphate. It functions in the pathway cell wall biogenesis; peptidoglycan biosynthesis. Its function is as follows. Cell wall formation. Adds enolpyruvyl to UDP-N-acetylglucosamine. In Thermus thermophilus (strain ATCC 27634 / DSM 579 / HB8), this protein is UDP-N-acetylglucosamine 1-carboxyvinyltransferase.